The primary structure comprises 325 residues: Probable cell division protein WhiA (325 aa).

Residues 273–306 constitute a DNA-binding region (H-T-H motif); it reads SLEELGRLADPPMTKDAVAGRIRRLLSMADRKAK.

The protein belongs to the WhiA family.

Functionally, involved in cell division and chromosome segregation. The protein is Probable cell division protein WhiA of Mycobacterium bovis (strain BCG / Tokyo 172 / ATCC 35737 / TMC 1019).